The following is a 31-amino-acid chain: Ranatuerin-2PL (31 aa).

The cysteines at positions 23 and 29 are disulfide-linked.

As to expression, expressed by the skin glands.

Its subcellular location is the secreted. Its function is as follows. Antimicrobial activity against Gram-negative bacterium E.coli. The sequence is that of Ranatuerin-2PL from Lithobates palustris (Pickerel frog).